The primary structure comprises 206 residues: FMN-dependent NADH:quinone oxidoreductase (206 aa).

FMN-binding positions include 15–17 (SVS), 94–97 (MYNF), and 138–141 (TRGG).

The protein belongs to the azoreductase type 1 family. Homodimer. The cofactor is FMN.

The enzyme catalyses 2 a quinone + NADH + H(+) = 2 a 1,4-benzosemiquinone + NAD(+). The catalysed reaction is N,N-dimethyl-1,4-phenylenediamine + anthranilate + 2 NAD(+) = 2-(4-dimethylaminophenyl)diazenylbenzoate + 2 NADH + 2 H(+). Quinone reductase that provides resistance to thiol-specific stress caused by electrophilic quinones. In terms of biological role, also exhibits azoreductase activity. Catalyzes the reductive cleavage of the azo bond in aromatic azo compounds to the corresponding amines. The polypeptide is FMN-dependent NADH:quinone oxidoreductase (Rhizobium meliloti (strain 1021) (Ensifer meliloti)).